The primary structure comprises 309 residues: Glutaminase (309 aa).

Substrate contacts are provided by Ser64, Asn114, Glu160, Asn167, Tyr191, Tyr243, and Val261.

It belongs to the glutaminase family. Homotetramer.

The catalysed reaction is L-glutamine + H2O = L-glutamate + NH4(+). The sequence is that of Glutaminase from Methylobacterium sp. (strain 4-46).